The following is a 565-amino-acid chain: Periplasmic trehalase (565 aa).

The first 30 residues, 1 to 30 (MKSPAPSRPQKMALIPACIFLCFAALSVQA), serve as a signal peptide directing secretion. Substrate contacts are provided by residues arginine 152, 159–160 (WD), asparagine 196, 205–207 (RSQ), 277–279 (RPE), and glycine 310. Residues aspartate 312 and glutamate 496 each act as proton donor/acceptor in the active site. Glutamate 511 is a binding site for substrate. Positions 538–565 (PCDNVPATRPTVKSATTQPSTKEAQPTP) are disordered. Residues 548 to 565 (TVKSATTQPSTKEAQPTP) show a composition bias toward polar residues.

Belongs to the glycosyl hydrolase 37 family. Monomer.

It localises to the periplasm. The catalysed reaction is alpha,alpha-trehalose + H2O = alpha-D-glucose + beta-D-glucose. Provides the cells with the ability to utilize trehalose at high osmolarity by splitting it into glucose molecules that can subsequently be taken up by the phosphotransferase-mediated uptake system. This chain is Periplasmic trehalase, found in Escherichia coli (strain K12 / MC4100 / BW2952).